The following is a 304-amino-acid chain: Deoxyribonuclease-1-like 1 (304 aa).

Positions 1 to 24 (MPYMAMHGLTVALLLIFLAGGTEA) are cleaved as a signal peptide. Asparagine 92 carries an N-linked (GlcNAc...) asparagine glycan. The active site involves glutamate 103. A glycan (N-linked (GlcNAc...) asparagine) is linked at asparagine 123. The active site involves histidine 154. Residues cysteine 193 and cysteine 230 are joined by a disulfide bond. N-linked (GlcNAc...) asparagine glycosylation occurs at asparagine 229.

This sequence belongs to the DNase I family.

The protein localises to the endoplasmic reticulum. This is Deoxyribonuclease-1-like 1 (DNASE1L1) from Cricetulus griseus (Chinese hamster).